Here is a 516-residue protein sequence, read N- to C-terminus: Signal recognition particle protein (516 aa).

GTP is bound by residues G108–T115, D191–R195, and T249–D252. A disordered region spans residues M383–G405.

The protein belongs to the GTP-binding SRP family. SRP54 subfamily. As to quaternary structure, part of the signal recognition particle protein translocation system, which is composed of SRP and FtsY.

It localises to the cytoplasm. The enzyme catalyses GTP + H2O = GDP + phosphate + H(+). Its function is as follows. Involved in targeting and insertion of nascent membrane proteins into the cytoplasmic membrane. Binds to the hydrophobic signal sequence of the ribosome-nascent chain (RNC) as it emerges from the ribosomes. The SRP-RNC complex is then targeted to the cytoplasmic membrane where it interacts with the SRP receptor FtsY. In Streptococcus mutans serotype c (strain ATCC 700610 / UA159), this protein is Signal recognition particle protein.